Here is a 93-residue protein sequence, read N- to C-terminus: Putative pterin-4-alpha-carbinolamine dehydratase (93 aa).

The protein belongs to the pterin-4-alpha-carbinolamine dehydratase family.

The catalysed reaction is (4aS,6R)-4a-hydroxy-L-erythro-5,6,7,8-tetrahydrobiopterin = (6R)-L-erythro-6,7-dihydrobiopterin + H2O. This is Putative pterin-4-alpha-carbinolamine dehydratase from Trichodesmium erythraeum (strain IMS101).